Here is a 1446-residue protein sequence, read N- to C-terminus: Centrosomal protein of 164 kDa (1446 aa).

An interaction with ATRIP region spans residues 1–195; it reads MARRPILLGD…PPQGLKAAAC (195 aa). A WW domain is found at 56 to 89; it reads APLPKGWKPCQNITGDLYYFNFDTGQSIWDHPCD. Disordered stretches follow at residues 106 to 132 and 159 to 185; these read PGAIKKKDKKKKKEKKNKKDKETSKSP and PPSALRGSQSVSLGSSADSGHLGEPTL. Positions 109–121 are enriched in basic residues; the sequence is IKKKDKKKKKEKK. Residues 164–176 are compositionally biased toward polar residues; that stretch reads RGSQSVSLGSSAD. Phosphoserine is present on Ser-202. Disordered stretches follow at residues 217 to 238, 250 to 408, 424 to 570, and 830 to 849; these read EETNEEDEEESDNQSVRSSSEL, GGNF…SFLG, GDTL…EPAA, and KRQEVEREHERKMDKMKEEH. Positions 218–228 are enriched in acidic residues; sequence ETNEEDEEESD. Basic and acidic residues predominate over residues 257–277; sequence ESPRTSQPDKKDVSLDSDADR. Residues 288 to 312 are compositionally biased toward polar residues; that stretch reads GADSSVASANGSKSQGRGASPWNPQ. Composition is skewed to basic and acidic residues over residues 355-372 and 384-397; these read KEGECRRESAAKEPKEAS and SEIHGHLKDARHSG. The segment covering 451-461 has biased composition (polar residues); sequence SSIAEPQSKHT. 2 stretches are compositionally biased toward basic and acidic residues: residues 490 to 499 and 525 to 534; these read PEWKEAEGPG and ERAEEKHSQA. Positions 1143 to 1197 form a coiled coil; it reads EVLGNMRKNLNEETRHLDEMKSAMRKGHDLLKKKEEKLIQLESSLQEEVSDEDTL. Residues 1261 to 1287 are disordered; sequence LGSLNSQPPPQGLGSQPPPPLFTSSLR. Residues 1267–1281 are compositionally biased toward pro residues; that stretch reads QPPPQGLGSQPPPPL. 2 positions are modified to phosphoserine: Ser-1369 and Ser-1371.

Interacts (via N-terminus) with ATRIP. Interacts with ATM, ATR and MDC1. Interacts with XPA (via N-terminus) upon UV irradiation. Interacts with CEP83, CCDC92, TTBK2, DVL3, NPHP3 and weakly with NPHP4. Interacts with DZIP1.

The protein localises to the cytoplasm. The protein resides in the cytoskeleton. It is found in the microtubule organizing center. It localises to the centrosome. Its subcellular location is the centriole. The protein localises to the nucleus. Plays a role in microtubule organization and/or maintenance for the formation of primary cilia (PC), a microtubule-based structure that protrudes from the surface of epithelial cells. Plays a critical role in G2/M checkpoint and nuclear divisions. A key player in the DNA damage-activated ATR/ATM signaling cascade since it is required for the proper phosphorylation of H2AX, RPA, CHEK2 and CHEK1. Plays a critical role in chromosome segregation, acting as a mediator required for the maintenance of genomic stability through modulation of MDC1, RPA and CHEK1. This chain is Centrosomal protein of 164 kDa, found in Mus musculus (Mouse).